The following is a 360-amino-acid chain: Phospho-N-acetylmuramoyl-pentapeptide-transferase (360 aa).

10 helical membrane passes run 27-47 (GAMI…INSL), 71-91 (TPTM…LLWA), 93-113 (LASV…AIGF), 128-148 (FSGK…AFVI), 168-188 (FVVN…VGAG), 199-219 (GLAI…AYLS), 239-259 (LAVV…FNAP), 262-282 (AIFM…TVAV), 288-308 (IVLA…IIQV), and 337-357 (QVVI…LSTL).

The protein belongs to the glycosyltransferase 4 family. MraY subfamily. Mg(2+) is required as a cofactor.

It localises to the cell inner membrane. It catalyses the reaction UDP-N-acetyl-alpha-D-muramoyl-L-alanyl-gamma-D-glutamyl-meso-2,6-diaminopimeloyl-D-alanyl-D-alanine + di-trans,octa-cis-undecaprenyl phosphate = di-trans,octa-cis-undecaprenyl diphospho-N-acetyl-alpha-D-muramoyl-L-alanyl-D-glutamyl-meso-2,6-diaminopimeloyl-D-alanyl-D-alanine + UMP. The protein operates within cell wall biogenesis; peptidoglycan biosynthesis. Functionally, catalyzes the initial step of the lipid cycle reactions in the biosynthesis of the cell wall peptidoglycan: transfers peptidoglycan precursor phospho-MurNAc-pentapeptide from UDP-MurNAc-pentapeptide onto the lipid carrier undecaprenyl phosphate, yielding undecaprenyl-pyrophosphoryl-MurNAc-pentapeptide, known as lipid I. The chain is Phospho-N-acetylmuramoyl-pentapeptide-transferase from Brucella anthropi (strain ATCC 49188 / DSM 6882 / CCUG 24695 / JCM 21032 / LMG 3331 / NBRC 15819 / NCTC 12168 / Alc 37) (Ochrobactrum anthropi).